A 785-amino-acid chain; its full sequence is Penicillin-binding protein 1A (785 aa).

The Cytoplasmic segment spans residues 1-6 (MYKSLF). The chain crosses the membrane as a helical; Signal-anchor for type II membrane protein span at residues 7 to 27 (FFLKIFAILILLGCSVTAYII). Residues 28 to 785 (YHYSHDLPDY…GISDQSQEIY (758 aa)) lie on the Periplasmic side of the membrane. The segment at 49-220 (TRIYSRDGKL…SELNPDKNYS (172 aa)) is transglycosylase. Glu-87 serves as the catalytic Proton donor; for transglycosylase activity. The interval 398–711 (DVIVVEPIKD…SNVVLPIFID (314 aa)) is transpeptidase. Ser-457 functions as the Acyl-ester intermediate; for transpeptidase activity in the catalytic mechanism.

It in the N-terminal section; belongs to the glycosyltransferase 51 family. In the C-terminal section; belongs to the transpeptidase family.

Its subcellular location is the cell inner membrane. It catalyses the reaction [GlcNAc-(1-&gt;4)-Mur2Ac(oyl-L-Ala-gamma-D-Glu-L-Lys-D-Ala-D-Ala)](n)-di-trans,octa-cis-undecaprenyl diphosphate + beta-D-GlcNAc-(1-&gt;4)-Mur2Ac(oyl-L-Ala-gamma-D-Glu-L-Lys-D-Ala-D-Ala)-di-trans,octa-cis-undecaprenyl diphosphate = [GlcNAc-(1-&gt;4)-Mur2Ac(oyl-L-Ala-gamma-D-Glu-L-Lys-D-Ala-D-Ala)](n+1)-di-trans,octa-cis-undecaprenyl diphosphate + di-trans,octa-cis-undecaprenyl diphosphate + H(+). The enzyme catalyses Preferential cleavage: (Ac)2-L-Lys-D-Ala-|-D-Ala. Also transpeptidation of peptidyl-alanyl moieties that are N-acyl substituents of D-alanine.. It functions in the pathway cell wall biogenesis; peptidoglycan biosynthesis. Functionally, cell wall formation. Synthesis of cross-linked peptidoglycan from the lipid intermediates. The enzyme has a penicillin-insensitive transglycosylase N-terminal domain (formation of linear glycan strands) and a penicillin-sensitive transpeptidase C-terminal domain (cross-linking of the peptide subunits). This chain is Penicillin-binding protein 1A (mrcA), found in Rickettsia typhi (strain ATCC VR-144 / Wilmington).